We begin with the raw amino-acid sequence, 366 residues long: Chorismate synthase (366 aa).

NADP(+) contacts are provided by Arg-48 and Arg-54. Residues 125-127 (RSS), 237-238 (NA), Gly-277, 292-296 (KPTSS), and Arg-318 each bind FMN.

The protein belongs to the chorismate synthase family. In terms of assembly, homotetramer. It depends on FMNH2 as a cofactor.

It carries out the reaction 5-O-(1-carboxyvinyl)-3-phosphoshikimate = chorismate + phosphate. It functions in the pathway metabolic intermediate biosynthesis; chorismate biosynthesis; chorismate from D-erythrose 4-phosphate and phosphoenolpyruvate: step 7/7. Its function is as follows. Catalyzes the anti-1,4-elimination of the C-3 phosphate and the C-6 proR hydrogen from 5-enolpyruvylshikimate-3-phosphate (EPSP) to yield chorismate, which is the branch point compound that serves as the starting substrate for the three terminal pathways of aromatic amino acid biosynthesis. This reaction introduces a second double bond into the aromatic ring system. In Acidovorax ebreus (strain TPSY) (Diaphorobacter sp. (strain TPSY)), this protein is Chorismate synthase.